A 345-amino-acid polypeptide reads, in one-letter code: 3-isopropylmalate dehydrogenase (345 aa).

Position 74–87 (74–87) interacts with NAD(+); it reads GPKWDGLPRKIRPE. Positions 94, 104, 132, and 217 each coordinate substrate. Mg(2+) contacts are provided by aspartate 217, aspartate 241, and aspartate 245. An NAD(+)-binding site is contributed by 274–286; it reads GSAPDIAGKGLAN.

Belongs to the isocitrate and isopropylmalate dehydrogenases family. LeuB type 1 subfamily. As to quaternary structure, homodimer. The cofactor is Mg(2+). It depends on Mn(2+) as a cofactor.

The protein localises to the cytoplasm. It catalyses the reaction (2R,3S)-3-isopropylmalate + NAD(+) = 4-methyl-2-oxopentanoate + CO2 + NADH. Its pathway is amino-acid biosynthesis; L-leucine biosynthesis; L-leucine from 3-methyl-2-oxobutanoate: step 3/4. In terms of biological role, catalyzes the oxidation of 3-carboxy-2-hydroxy-4-methylpentanoate (3-isopropylmalate) to 3-carboxy-4-methyl-2-oxopentanoate. The product decarboxylates to 4-methyl-2 oxopentanoate. In Thermus thermophilus (strain ATCC BAA-163 / DSM 7039 / HB27), this protein is 3-isopropylmalate dehydrogenase (leuB).